A 176-amino-acid chain; its full sequence is MAIRLEDKKAIVAEVNETAANALSLVVADARGVTVGAMDTLRKQARESGVRLQVVRNTLAKRAIEGTDFECVKDALVGPSIFGFSMEDPGAAARLFKDFAKEQSKFEIKALSVGGKLLEAGQIDALAKLPTLEQALGQLASVMIAPVTKLVRTFNEVPTKVTRVVAAVRDQKQDAA.

It belongs to the universal ribosomal protein uL10 family. In terms of assembly, part of the ribosomal stalk of the 50S ribosomal subunit. The N-terminus interacts with L11 and the large rRNA to form the base of the stalk. The C-terminus forms an elongated spine to which L12 dimers bind in a sequential fashion forming a multimeric L10(L12)X complex.

Functionally, forms part of the ribosomal stalk, playing a central role in the interaction of the ribosome with GTP-bound translation factors. The sequence is that of Large ribosomal subunit protein uL10 from Saccharophagus degradans (strain 2-40 / ATCC 43961 / DSM 17024).